A 1247-amino-acid chain; its full sequence is Structural polyprotein (1247 aa).

A host transcription inhibition region spans residues 36 to 67; the sequence is RPAGQLAQLISAVSRLALRTVPQKPRRTRKIK. The tract at residues 54–103 is disordered; sequence RTVPQKPRRTRKIKKQKQVKQEQQSTTNQKKKAPKQKQTQKKKRPGRRER. Basic residues-rich tracts occupy residues 59-71 and 82-100; these read KPRR…KQKQ and QKKK…RPGR. Positions 60–98 match the Nuclear localization signal motif; it reads PRRTRKIKKQKQVKQEQQSTTNQKKKAPKQKQTQKKKRP. The interval 83-113 is binding to the viral RNA; sequence KKKAPKQKQTQKKKRPGRRERMCMKIENDCI. The segment at 98 to 112 is ribosome-binding; that stretch reads PGRRERMCMKIENDC. C112 and C127 form a disulfide bridge. The Peptidase S3 domain occupies 112-260; sequence CIFEVRHEGK…KITPEGSVEW (149 aa). Residue H138 is the Charge relay system of the active site. The Nuclear export signal signature appears at 143–153; sequence IDNADLAKLAF. Residues 154–159 are interaction with spike glycoprotein E2; it reads KRSSKY. Residue D160 is the Charge relay system of the active site. Residues 182–192 are dimerization of the capsid protein; the sequence is PEGYYNWHHGA. Residue S212 is the Charge relay system of the active site. The tract at residues 218–222 is dimerization of the capsid protein; the sequence is DNKGR. Residues 261-273 form a functions as an uncleaved signal peptide for the precursor of protein E3/E2 region; it reads SLALPVMCLLANT. Disulfide bonds link C268–C277, C282–C286, C285–C317, C343–C449, C346–C352, C415–C429, C477–C590, C525–C549, and C527–C544. A glycan (N-linked (GlcNAc...) asparagine; by host) is linked at N272. 2 N-linked (GlcNAc...) asparagine; by host glycosylation sites follow: N587 and N669. Residues 692-712 traverse the membrane as a helical segment; sequence IAVLAAASIVITSLVGLSLGM. Positions 715–719 are interaction with the capsid protein; that stretch reads CARRR. S-palmitoyl cysteine; by host attachment occurs at residues C720, C740, and C741. A helical membrane pass occupies residues 720–740; that stretch reads CITPYELTPGATIPFLLGVLC. The segment at 720-740 is transient transmembrane before p62-6K protein processing; that stretch reads CITPYELTPGATIPFLLGVLC. A disulfide bridge connects residues C720 and C741. A helical transmembrane segment spans residues 763–783; it reads PLFWLQLLIPLSAAIVVCNCL. Intrachain disulfides connect C857-C922, C870-C902, C871-C904, and C876-C886. The E1 fusion peptide loop stretch occupies residues 892-909; that stretch reads VYPFMWGGAYCFCDAENT. 2 N-linked (GlcNAc...) asparagine; by host glycosylation sites follow: N949 and N1078. Disulfide bonds link C1067–C1079, C1109–C1184, C1114–C1188, and C1136–C1178. Residues 1224–1244 traverse the membrane as a helical segment; it reads GVGLVVAIAALILIIVLCVSF. C1241 carries the S-palmitoyl cysteine; by host lipid modification. A lipid anchor (S-stearoyl cysteine; by host) is attached at C1241.

In terms of assembly, homodimer. Homomultimer. Interacts with host karyopherin KPNA4; this interaction allows the nuclear import of the viral capsid protein. Interacts with spike glycoprotein E2. Interacts with host IRAK1; the interaction leads to inhibition of IRAK1-dependent signaling. The precursor of protein E3/E2 and E1 form a heterodimer shortly after synthesis. As to quaternary structure, the precursor of protein E3/E2 and E1 form a heterodimer shortly after synthesis. Processing of the precursor of protein E3/E2 into E2 and E3 results in a heterodimer of the spike glycoproteins E2 and E1. Spike at virion surface are constituted of three E2-E1 heterodimers. After target cell attachment and endocytosis, E1 change conformation to form homotrimers. Interacts with 6K protein. In terms of assembly, interacts with spike glycoprotein E1. Processing of the precursor of protein E3/E2 into E2 and E3 results in a heterodimer of the spike glycoproteins E2 and E1. Spike at virion surface are constituted of a trimer of E2-E1 heterodimers. Interacts with 6K protein. Interacts with host MXRA8; this interaction mediates virus entry. Oligomer. Interacts with spike glycoprotein E1. Interacts with spike glycoprotein E2. Structural polyprotein: Specific enzymatic cleavages in vivo yield mature proteins. Capsid protein is auto-cleaved during polyprotein translation, unmasking a signal peptide at the N-terminus of the precursor of E3/E2. The remaining polyprotein is then targeted to the host endoplasmic reticulum, where host signal peptidase cleaves it into pE2, 6K and E1 proteins. pE2 is further processed to mature E3 and E2 by host furin in trans-Golgi vesicle. In terms of processing, palmitoylated via thioester bonds. These palmitoylations may induce disruption of the C-terminus transmembrane. This would result in the reorientation of E2 C-terminus from lumenal to cytoplasmic side. Post-translationally, N-glycosylated. Palmitoylated via thioester bonds.

The protein resides in the virion. It localises to the host cytoplasm. Its subcellular location is the host cell membrane. The protein localises to the host nucleus. It is found in the virion membrane. The protein resides in the host Golgi apparatus. It localises to the host trans-Golgi network. Its subcellular location is the host endoplasmic reticulum. It catalyses the reaction Autocatalytic release of the core protein from the N-terminus of the togavirus structural polyprotein by hydrolysis of a -Trp-|-Ser- bond.. Its function is as follows. Forms an icosahedral capsid with a T=4 symmetry composed of 240 copies of the capsid protein surrounded by a lipid membrane through which penetrate 80 spikes composed of trimers of E1-E2 heterodimers. The capsid protein binds to the viral RNA genome at a site adjacent to a ribosome binding site for viral genome translation following genome release. Possesses a protease activity that results in its autocatalytic cleavage from the nascent structural protein. Following its self-cleavage, the capsid protein transiently associates with ribosomes, and within several minutes the protein binds to viral RNA and rapidly assembles into icosahedric core particles. The resulting nucleocapsid eventually associates with the cytoplasmic domain of the spike glycoprotein E2 at the cell membrane, leading to budding and formation of mature virions. In case of infection, new virions attach to target cells and after clathrin-mediated endocytosis their membrane fuses with the host endosomal membrane. This leads to the release of the nucleocapsid into the cytoplasm, followed by an uncoating event necessary for the genomic RNA to become accessible. The uncoating might be triggered by the interaction of capsid proteins with ribosomes. Binding of ribosomes would release the genomic RNA since the same region is genomic RNA-binding and ribosome-binding. Specifically inhibits interleukin-1 receptor-associated kinase 1/IRAK1-dependent signaling during viral entry, representing a means by which the alphaviruses may evade innate immune detection and activation prior to viral gene expression. Provides the signal sequence for the translocation of the precursor of protein E3/E2 to the host endoplasmic reticulum. Furin-cleaved E3 remains associated with spike glycoprotein E1 and mediates pH protection of the latter during the transport via the secretory pathway. After virion release from the host cell, the assembly protein E3 is gradually released in the extracellular space. In terms of biological role, plays a role in viral attachment to target host cell, by binding to the cell receptor MXRA8. Synthesized as a p62 precursor which is processed by furin at the cell membrane just before virion budding, giving rise to E2-E1 heterodimer. The p62-E1 heterodimer is stable, whereas E2-E1 is unstable and dissociate at low pH. p62 is processed at the last step, presumably to avoid E1 fusion activation before its final export to cell surface. E2 C-terminus contains a transitory transmembrane that would be disrupted by palmitoylation, resulting in reorientation of the C-terminal tail from lumenal to cytoplasmic side. This step is critical since E2 C-terminus is involved in budding by interacting with capsid proteins. This release of E2 C-terminus in cytoplasm occurs lately in protein export, and precludes premature assembly of particles at the endoplasmic reticulum membrane. Functionally, acts as a viroporin that participates in virus glycoprotein processing and transport to the plasma membrane, cell permeabilization and budding of viral particles. Disrupts the calcium homeostasis of the cell, probably at the endoplasmic reticulum level. This leads to cytoplasmic calcium elevation. Because of its lipophilic properties, the 6K protein is postulated to influence the selection of lipids that interact with the transmembrane domains of the glycoproteins, which, in turn, affects the deformability of the bilayer required for the extreme curvature that occurs as budding proceeds. Present in low amount in virions, about 3% compared to viral glycoproteins. Its function is as follows. Class II viral fusion protein. Fusion activity is inactive as long as E1 is bound to E2 in mature virion. After virus attachment to target cell via host MXRA8 and endocytosis, acidification of the endosome induce dissociation of E1/E2 heterodimer and concomitant trimerization of the E1 subunits. This E1 trimer is fusion active, and promotes release of viral nucleocapsid in cytoplasm after endosome and viral membrane fusion. Efficient fusion requires the presence of cholesterol and sphingolipid in the target membrane. The protein is Structural polyprotein of O'nyong-nyong virus (strain Gulu) (ONNV).